The sequence spans 219 residues: RNA chaperone ProQ (219 aa).

Residues 102–160 (TLKESQDKAKAKRAERSKDEGDAADKAPRKPKRKPQPQARRDAKPAAKDKPKAAPKAPA) form a disordered region. Basic and acidic residues-rich tracts occupy residues 105-129 (ESQDKAKAKRAERSKDEGDAADKAP) and 140-153 (ARRDAKPAAKDKPK).

This sequence belongs to the ProQ family.

Its subcellular location is the cytoplasm. In terms of biological role, RNA chaperone with significant RNA binding, RNA strand exchange and RNA duplexing activities. This Shewanella amazonensis (strain ATCC BAA-1098 / SB2B) protein is RNA chaperone ProQ.